A 395-amino-acid chain; its full sequence is MLPAVGSADEEEDPAEEDCPELVPMETTQSEEEEKSGLGAKIPVTIITGYLGAGKTTLLNYILTEQHSKRVAVILNEFGEGSALEKSLAVSQGGELYEEWLELRNGCLCCSVKDNGLRAIENLMQKKGKFDYILLETTGLADPGAVASMFWVDAELGSDIYLDGIITIVDSKYGLKHLAEEKPDGLINEATRQVALADAILINKTDLVPEEDVKKLRATIRSINGLGQILETQRSRVDLSNVLDLHAFDSLSGISLQKKLQHVPGTQPHLDQSIVTITFEVPGNAKEEHLNMFIQNLLWEKNVRNKDNHCMEVIRLKGLVSIKDKSQQVIVQGVHELYDLEETPVSWKDDTERTNRLVLLGRNLDKDILKQLFIATVTETEKQWTTHFKEDQVCT.

A disordered region spans residues 1–36; it reads MLPAVGSADEEEDPAEEDCPELVPMETTQSEEEEKS. Positions 8-20 are enriched in acidic residues; sequence ADEEEDPAEEDCP. Residues 17-24 carry the psi-PxLVp motif motif; that stretch reads EDCPELVP. Residue 49 to 56 participates in GTP binding; it reads GYLGAGKT. 3 residues coordinate Zn(2+): Cys107, Cys109, and Cys110. Positions 107–110 match the CXCC motif motif; the sequence is CLCC. GTP-binding positions include 110–114 and 203–206; these read CSVKD and NKTD. A CobW C-terminal domain is found at 274–377; that stretch reads IVTITFEVPG…ILKQLFIATV (104 aa).

It belongs to the SIMIBI class G3E GTPase family. ZNG1 subfamily.

It is found in the nucleus. The enzyme catalyses GTP + H2O = GDP + phosphate + H(+). Its function is as follows. Zinc chaperone that directly transfers zinc cofactor to target metalloproteins, thereby activating them. Catalyzes zinc insertion into the active site of methionine aminopeptidase METAP1, which function to cleave the initiator methionine from polypeptides during or after protein translation. Mechanistically, the N-terminal psi-PxLVp motif binds to the C6H2-type zinc finger of inactive form of METAP1. After formation of the docked complex, zinc is transferred from the CXCC motif in the GTPase domain of ZNG1B to the zinc binding site in the peptidase domain of METAP1 in a process requiring GTP hydrolysis. GTP/GDP exchange is required for release of active METAP1. The chain is Zinc-regulated GTPase metalloprotein activator 1B from Homo sapiens (Human).